The sequence spans 158 residues: 6,7-dimethyl-8-ribityllumazine synthase (158 aa).

Residues Phe23, 61 to 63 (SFE), and 85 to 87 (AVI) each bind 5-amino-6-(D-ribitylamino)uracil. 90–91 (ET) provides a ligand contact to (2S)-2-hydroxy-3-oxobutyl phosphate. Catalysis depends on His93, which acts as the Proton donor. Phe118 provides a ligand contact to 5-amino-6-(D-ribitylamino)uracil. Residue Arg132 coordinates (2S)-2-hydroxy-3-oxobutyl phosphate.

It belongs to the DMRL synthase family.

It carries out the reaction (2S)-2-hydroxy-3-oxobutyl phosphate + 5-amino-6-(D-ribitylamino)uracil = 6,7-dimethyl-8-(1-D-ribityl)lumazine + phosphate + 2 H2O + H(+). It functions in the pathway cofactor biosynthesis; riboflavin biosynthesis; riboflavin from 2-hydroxy-3-oxobutyl phosphate and 5-amino-6-(D-ribitylamino)uracil: step 1/2. Catalyzes the formation of 6,7-dimethyl-8-ribityllumazine by condensation of 5-amino-6-(D-ribitylamino)uracil with 3,4-dihydroxy-2-butanone 4-phosphate. This is the penultimate step in the biosynthesis of riboflavin. The protein is 6,7-dimethyl-8-ribityllumazine synthase of Prochlorococcus marinus subsp. pastoris (strain CCMP1986 / NIES-2087 / MED4).